We begin with the raw amino-acid sequence, 185 residues long: ATP-dependent protease subunit HslV (185 aa).

Threonine 14 is an active-site residue. 3 residues coordinate Na(+): alanine 168, cysteine 171, and threonine 174.

Belongs to the peptidase T1B family. HslV subfamily. In terms of assembly, a double ring-shaped homohexamer of HslV is capped on each side by a ring-shaped HslU homohexamer. The assembly of the HslU/HslV complex is dependent on binding of ATP.

Its subcellular location is the cytoplasm. The catalysed reaction is ATP-dependent cleavage of peptide bonds with broad specificity.. Its activity is regulated as follows. Allosterically activated by HslU binding. Functionally, protease subunit of a proteasome-like degradation complex believed to be a general protein degrading machinery. The sequence is that of ATP-dependent protease subunit HslV from Hyphomonas neptunium (strain ATCC 15444).